Here is a 280-residue protein sequence, read N- to C-terminus: Polyamine aminopropyltransferase (280 aa).

The PABS domain occupies 2-235 (GGWIDEEHRG…GWWSWTFAAV (234 aa)). S-methyl-5'-thioadenosine is bound at residue Gln29. Spermidine is bound by residues His60 and Asp84. S-methyl-5'-thioadenosine contacts are provided by residues Glu104 and 136 to 137 (DG). Asp155 serves as the catalytic Proton acceptor. Pro162 lines the S-methyl-5'-thioadenosine pocket.

This sequence belongs to the spermidine/spermine synthase family. Homodimer or homotetramer.

The protein resides in the cytoplasm. It catalyses the reaction S-adenosyl 3-(methylsulfanyl)propylamine + putrescine = S-methyl-5'-thioadenosine + spermidine + H(+). It participates in amine and polyamine biosynthesis; spermidine biosynthesis; spermidine from putrescine: step 1/1. Catalyzes the irreversible transfer of a propylamine group from the amino donor S-adenosylmethioninamine (decarboxy-AdoMet) to putrescine (1,4-diaminobutane) to yield spermidine. This Parasynechococcus marenigrum (strain WH8102) protein is Polyamine aminopropyltransferase.